The sequence spans 487 residues: Serralysin (487 aa).

A propeptide spanning residues 1-16 (MQSTKKAIEITESSLA) is cleaved from the precursor. Histidine 192 contributes to the Zn(2+) binding site. Glutamate 193 is an active-site residue. 3 residues coordinate Zn(2+): histidine 196, histidine 202, and tyrosine 232. Ca(2+)-binding residues include arginine 269, glycine 271, threonine 273, aspartate 301, glycine 303, glycine 304, aspartate 306, threonine 343, glutamate 345, glycine 350, glycine 352, aspartate 354, asparagine 359, alanine 361, asparagine 363, glycine 367, glycine 368, alanine 369, glycine 370, aspartate 372, glycine 376, glycine 377, glycine 378, glycine 379, aspartate 381, glycine 385, glycine 386, alanine 387, glycine 388, aspartate 390, aspartate 399, aspartate 406, and aspartate 416. Hemolysin-type calcium-binding repeat units follow at residues 348-365 (IGGS…NNVL) and 366-383 (KGGA…ADEL).

This sequence belongs to the peptidase M10B family. Ca(2+) is required as a cofactor. Zn(2+) serves as cofactor.

It is found in the secreted. The enzyme catalyses Preferential cleavage of bonds with hydrophobic residues in P1'.. Its function is as follows. Has insecticidal activity against the locust M.palpalis. When administered orally to locusts at a low dose it causes them to lie on their sides exhibiting sporadic limb movements and muscular twitching, followed by full recovery. When administered at higher doses the same symptoms are observed, followed by death. This Serratia marcescens protein is Serralysin.